Consider the following 98-residue polypeptide: NADH-ubiquinone oxidoreductase chain 4L (98 aa).

The next 3 helical transmembrane spans lie at 1–21 (MTLI…GLLM), 29–49 (ALLC…LTIL), and 61–81 (IILL…LVTI).

It belongs to the complex I subunit 4L family. In terms of assembly, core subunit of respiratory chain NADH dehydrogenase (Complex I) which is composed of 45 different subunits.

It localises to the mitochondrion inner membrane. The catalysed reaction is a ubiquinone + NADH + 5 H(+)(in) = a ubiquinol + NAD(+) + 4 H(+)(out). Its function is as follows. Core subunit of the mitochondrial membrane respiratory chain NADH dehydrogenase (Complex I) which catalyzes electron transfer from NADH through the respiratory chain, using ubiquinone as an electron acceptor. Part of the enzyme membrane arm which is embedded in the lipid bilayer and involved in proton translocation. The chain is NADH-ubiquinone oxidoreductase chain 4L (MT-ND4L) from Eubalaena australis (Southern right whale).